A 238-amino-acid polypeptide reads, in one-letter code: uncharacterized protein (238 aa).

7 consecutive transmembrane segments (helical) span residues 22–42 (VYGWMTAGLAVTALTSLGLYA), 49–69 (LFSLWWVWCFATLGVSFYIQA), 78–98 (AVMGLFLAYSVLEGMFFGTMV), 105–125 (FGGGIVWAAFGSAAVIFGLSA), 141–161 (ILMLALIGLMVISLGFLVVSL), 166–186 (PLMYLLICYLGLIIFVGLTVV), and 208–228 (LSLIMALQMYCNVIMIFWYLL).

It belongs to the BI1 family.

It localises to the cell membrane. This is an uncharacterized protein from Chlamydia muridarum (strain MoPn / Nigg).